Consider the following 520-residue polypeptide: Serine protease Hip1 (520 aa).

Positions 1 to 30 (MGMRLSRRDKIARMLLIWAALAAVALVLVG) are cleaved as a signal peptide. Cysteine 31 is lipidated: N-palmitoyl cysteine. Cysteine 31 carries S-diacylglycerol cysteine lipidation. Residues 102–497 (GSLVINPGGP…TQHTVVFQGD (396 aa)) enclose the AB hydrolase-1 domain. Serine 228 serves as the catalytic Nucleophile. Aspartate 463 is a catalytic residue. Histidine 490 (proton donor) is an active-site residue.

Belongs to the peptidase S33 family.

It is found in the cell envelope. Its subcellular location is the cell membrane. Functionally, serine protease that promotes pathogenesis by promoting the processing and the extracellular release of the M.bovis heat-shock protein GroEL2. Key immunomodulatory virulence factor, which promotes survival in host macrophages and modulates host immune responses. This is Serine protease Hip1 from Mycobacterium bovis (strain ATCC BAA-935 / AF2122/97).